The following is a 514-amino-acid chain: 2,3-bisphosphoglycerate-independent phosphoglycerate mutase (514 aa).

Mn(2+) contacts are provided by Asp-14 and Ser-64. Ser-64 (phosphoserine intermediate) is an active-site residue. Residues His-125, 155-156 (RD), Arg-187, Arg-193, 263-266 (RADR), and Lys-336 contribute to the substrate site. Positions 403, 407, 444, 445, and 463 each coordinate Mn(2+).

The protein belongs to the BPG-independent phosphoglycerate mutase family. Monomer. The cofactor is Mn(2+).

The enzyme catalyses (2R)-2-phosphoglycerate = (2R)-3-phosphoglycerate. Its pathway is carbohydrate degradation; glycolysis; pyruvate from D-glyceraldehyde 3-phosphate: step 3/5. Functionally, catalyzes the interconversion of 2-phosphoglycerate and 3-phosphoglycerate. This is 2,3-bisphosphoglycerate-independent phosphoglycerate mutase from Shewanella sp. (strain MR-4).